The chain runs to 756 residues: 5-methyltetrahydropteroyltriglutamate--homocysteine methyltransferase (756 aa).

Residues 16–19 (RELK) and K112 each bind 5-methyltetrahydropteroyltri-L-glutamate. Residues 432-434 (IGS) and E485 contribute to the L-homocysteine site. L-methionine-binding positions include 432–434 (IGS) and E485. Residues 516-517 (RC) and W562 each bind 5-methyltetrahydropteroyltri-L-glutamate. L-homocysteine is bound at residue D600. D600 serves as a coordination point for L-methionine. E606 is a 5-methyltetrahydropteroyltri-L-glutamate binding site. The Zn(2+) site is built by H642, C644, and E666. H695 functions as the Proton donor in the catalytic mechanism. C727 lines the Zn(2+) pocket.

Belongs to the vitamin-B12 independent methionine synthase family. Requires Zn(2+) as cofactor.

The catalysed reaction is 5-methyltetrahydropteroyltri-L-glutamate + L-homocysteine = tetrahydropteroyltri-L-glutamate + L-methionine. Its pathway is amino-acid biosynthesis; L-methionine biosynthesis via de novo pathway; L-methionine from L-homocysteine (MetE route): step 1/1. Its function is as follows. Catalyzes the transfer of a methyl group from 5-methyltetrahydrofolate to homocysteine resulting in methionine formation. In Haemophilus influenzae (strain ATCC 51907 / DSM 11121 / KW20 / Rd), this protein is 5-methyltetrahydropteroyltriglutamate--homocysteine methyltransferase.